The following is a 223-amino-acid chain: Deoxyribose-phosphate aldolase (223 aa).

Residue D91 is the Proton donor/acceptor of the active site. The active-site Schiff-base intermediate with acetaldehyde is K154. K183 serves as the catalytic Proton donor/acceptor.

It belongs to the DeoC/FbaB aldolase family. DeoC type 1 subfamily.

It is found in the cytoplasm. It carries out the reaction 2-deoxy-D-ribose 5-phosphate = D-glyceraldehyde 3-phosphate + acetaldehyde. It participates in carbohydrate degradation; 2-deoxy-D-ribose 1-phosphate degradation; D-glyceraldehyde 3-phosphate and acetaldehyde from 2-deoxy-alpha-D-ribose 1-phosphate: step 2/2. Functionally, catalyzes a reversible aldol reaction between acetaldehyde and D-glyceraldehyde 3-phosphate to generate 2-deoxy-D-ribose 5-phosphate. This Lysinibacillus sphaericus (strain C3-41) protein is Deoxyribose-phosphate aldolase.